The sequence spans 287 residues: Centromere protein P (287 aa).

Positions 1–37 (MDNSVYQVYEDEIQLLEEEIKLLSDKYEDIQQESTFF) form a coiled coil.

This sequence belongs to the CENP-P/CTF19 family. In terms of assembly, component of the CENPA-HI complex, at least composed of CENPH, CENPI, CENPK, CENPL, CENPM, CENPO and CENPP.

It is found in the nucleus. The protein resides in the chromosome. It localises to the centromere. In terms of biological role, component of the CENPA-HI complex, a centromeric complex involved in assembly of kinetochore proteins, mitotic progression and chromosome segregation. The polypeptide is Centromere protein P (CENPP) (Gallus gallus (Chicken)).